Consider the following 444-residue polypeptide: Spermatogenesis-associated protein 1 (444 aa).

Residues 145–160 are compositionally biased toward basic and acidic residues; that stretch reads GTIHRPDSLSLSKDEP. The segment at 145-229 is disordered; that stretch reads GTIHRPDSLS…DEGEEDDKAT (85 aa). Residues 268-403 are a coiled coil; it reads SLLKIEREKI…RKLDTDKMKL (136 aa).

Interacts with IFT20.

The protein resides in the cytoplasmic vesicle. It is found in the secretory vesicle. The protein localises to the acrosome. This Rattus norvegicus (Rat) protein is Spermatogenesis-associated protein 1 (Spata1).